A 7913-amino-acid chain; its full sequence is Nonribosomal peptide synthetase dtxS1 (7913 aa).

The segment at 263–662 is adenylation 1; the sequence is FEQRSRAHPN…GRNDNQVKIR (400 aa). The Carrier 1 domain occupies 789–865; it reads QPLSEVEKQV…NVAGQARRTT (77 aa). At S826 the chain carries O-(pantetheine 4'-phosphoryl)serine. Residues 903–1171 are condensation 1; sequence QDAFPCTSLQ…ITTVPVRIRL (269 aa). The tract at residues 1332 to 1740 is adenylation 2; that stretch reads LETQAHSRPD…GRKDAQVKIR (409 aa). The Carrier 2 domain maps to 1865–1941; that stretch reads QPRTKLERQL…NLAQATGTQG (77 aa). At S1902 the chain carries O-(pantetheine 4'-phosphoryl)serine. A condensation 2 region spans residues 1965–2249; that stretch reads PAQLSPIQRL…FSTIFPVRVS (285 aa). The interval 2863–3255 is adenylation 3; that stretch reads LAQPHEPAIC…ARKDAQIKIR (393 aa). In terms of domain architecture, Carrier 3 spans 3380–3456; sequence QPLSEAERKM…NVTHQAVAQL (77 aa). Position 3417 is an O-(pantetheine 4'-phosphoryl)serine (S3417). Positions 3496 to 3761 are condensation 3; the sequence is DAFPCTPLQE…FATLPLRVRL (266 aa). The interval 3924–4321 is adenylation 4; it reads DRVRIHPNAP…GRKDDQVKLR (398 aa). Positions 4439–4450 are enriched in polar residues; that stretch reads ELAQARTAQQGP. A disordered region spans residues 4439–4459; the sequence is ELAQARTAQQGPKRQPASEAE. The 77-residue stretch at 4453–4529 folds into the Carrier 4 domain; the sequence is QPASEAERQM…EAATQAQMLG (77 aa). The residue at position 4490 (S4490) is an O-(pantetheine 4'-phosphoryl)serine. Positions 4545 to 4837 are condensation 4; it reads QSFAQARLWF…VNMQCLRVKI (293 aa). The tract at residues 5006 to 5405 is adenylation 5; sequence FRQQVAACAD…RRMDAQVKIR (400 aa). The 77-residue stretch at 5933–6009 folds into the Carrier 5 domain; that stretch reads QPTSKTQRQL…DMAEGLPLAK (77 aa). At S5970 the chain carries O-(pantetheine 4'-phosphoryl)serine. The condensation 5 stretch occupies residues 6023–6315; the sequence is VEQSFAQRRL…VNMQCIRIRV (293 aa). Residues 6481 to 6766 are adenylation 6; it reads FRQQALLNPD…IINAYGPTEN (286 aa). One can recognise a Carrier 6 domain in the interval 7394–7470; it reads QPTTDMEREM…DLACHLSPEE (77 aa). S7431 carries the O-(pantetheine 4'-phosphoryl)serine modification. The tract at residues 7501–7771 is condensation 6; it reads EDVLPLTSFQ…CLNIVPIRVN (271 aa).

It belongs to the NRP synthetase family.

The protein operates within secondary metabolite biosynthesis. Its function is as follows. Nonribosomal peptide synthetase; part of the gene cluster that mediates the biosynthesis of destruxins, insecticidal cyclic hexadepsipeptides which induce flaccid paralysis and visceral muscle contraction in insects through targeting the calcium channels and vacuolar-type ATPases. The aldo-keto reductase dtxS3 converts alpha-ketoisocaproic acid from deaminated leucine into alpha-hydroxyisocaproic acid (HIC), which is the first substrate for destruxin assembly by dtxS1. L-aspartate decarboxylase dtxS4 converts aspartic acid into beta-alanine, the last substrate for the destruxin assembly line performed by dtxS1. The nonribosomal peptide synthetase dtxS1 synthesizes destruxins B and B2, whereas the cytochrome P450 monooxygenase dtxS2 is required to convert destruxin B into other destruxin derivatives, including destructins C, D, A and E. Destruxin E-diol (ED) is further produced in a non-enzymatic manner from destruxin E. Destruxins play an important role in virulence and escape from insect host immune defenses. In Metarhizium robertsii (strain ARSEF 23 / ATCC MYA-3075) (Metarhizium anisopliae (strain ARSEF 23)), this protein is Nonribosomal peptide synthetase dtxS1.